Reading from the N-terminus, the 843-residue chain is Urease (843 aa).

Residues 400-843 (GGIDCHVHFI…VPLSRNYFLF (444 aa)) form the Urease domain. His405, His407, and Lys488 together coordinate Ni(2+). Lys488 is subject to N6-carboxylysine. His490 lines the substrate pocket. The Ni(2+) site is built by His517 and His543. Catalysis depends on His591, which acts as the Proton donor. Position 631 (Asp631) interacts with Ni(2+).

In the C-terminal section; belongs to the metallo-dependent hydrolases superfamily. Urease alpha subunit family. In terms of assembly, homohexamer. Other oligomeric forms may exist depending on pH and presence of salts. Requires Ni(2+) as cofactor. Post-translationally, carboxylation allows a single lysine to coordinate two nickel ions.

The catalysed reaction is urea + 2 H2O + H(+) = hydrogencarbonate + 2 NH4(+). Its pathway is nitrogen metabolism; urea degradation; CO(2) and NH(3) from urea (urease route): step 1/1. Functionally, urea hydrolase involved in nitrogen recycling from ureide, purine, and arginine catabolism. In Oryza sativa subsp. indica (Rice), this protein is Urease.